Reading from the N-terminus, the 480-residue chain is UDP-N-acetylmuramate--L-alanine ligase (480 aa).

Residue 115–121 (GTHGKTT) participates in ATP binding.

The protein belongs to the MurCDEF family.

It localises to the cytoplasm. It catalyses the reaction UDP-N-acetyl-alpha-D-muramate + L-alanine + ATP = UDP-N-acetyl-alpha-D-muramoyl-L-alanine + ADP + phosphate + H(+). It functions in the pathway cell wall biogenesis; peptidoglycan biosynthesis. Functionally, cell wall formation. The polypeptide is UDP-N-acetylmuramate--L-alanine ligase (Gluconacetobacter diazotrophicus (strain ATCC 49037 / DSM 5601 / CCUG 37298 / CIP 103539 / LMG 7603 / PAl5)).